The primary structure comprises 492 residues: N-succinylglutamate 5-semialdehyde dehydrogenase (492 aa).

220 to 225 contributes to the NAD(+) binding site; that stretch reads GSANTG. Active-site residues include E243 and C277.

Belongs to the aldehyde dehydrogenase family. AstD subfamily.

It carries out the reaction N-succinyl-L-glutamate 5-semialdehyde + NAD(+) + H2O = N-succinyl-L-glutamate + NADH + 2 H(+). It functions in the pathway amino-acid degradation; L-arginine degradation via AST pathway; L-glutamate and succinate from L-arginine: step 4/5. Functionally, catalyzes the NAD-dependent reduction of succinylglutamate semialdehyde into succinylglutamate. In Shigella flexneri serotype 5b (strain 8401), this protein is N-succinylglutamate 5-semialdehyde dehydrogenase.